The following is a 255-amino-acid chain: MPRYKAVIAYDGAEFFGFQLQTKNGVESVRTVQGELNKVINKMAKNPSPQIKVVGASRTDTGVHAFGQVVHFDLPFNIDPEGVRKGMNTLLPFDVVVNHVEHVSDDFHARFNTHSKRYIYRVSTTDYKDPFKRKYTGHFHWKLDINRIKAALPDLLGEHDFASFAASGNETATTIRLITRADVDEKPEEHEIVFTFEGNAFLYNQIRIMVGVLLEIGTGKRPVHDIVRLIEVKDREQARYTAPASGLYLDEIDYN.

The active-site Nucleophile is D60. Y118 serves as a coordination point for substrate.

It belongs to the tRNA pseudouridine synthase TruA family. In terms of assembly, homodimer.

The enzyme catalyses uridine(38/39/40) in tRNA = pseudouridine(38/39/40) in tRNA. Functionally, formation of pseudouridine at positions 38, 39 and 40 in the anticodon stem and loop of transfer RNAs. This chain is tRNA pseudouridine synthase A, found in Leuconostoc mesenteroides subsp. mesenteroides (strain ATCC 8293 / DSM 20343 / BCRC 11652 / CCM 1803 / JCM 6124 / NCDO 523 / NBRC 100496 / NCIMB 8023 / NCTC 12954 / NRRL B-1118 / 37Y).